The following is a 649-amino-acid chain: Phosphomethylpyrimidine synthase (649 aa).

Substrate contacts are provided by residues asparagine 235, methionine 264, tyrosine 293, histidine 329, 349-351 (SRG), 390-393 (DGLR), and glutamate 429. Residue histidine 433 participates in Zn(2+) binding. Residue tyrosine 456 coordinates substrate. Residue histidine 497 coordinates Zn(2+). Cysteine 577, cysteine 580, and cysteine 585 together coordinate [4Fe-4S] cluster. The segment at 620 to 649 (GMRQKSQEFRDTGSELYHPAVGAKEAQLEE) is disordered. The span at 621–632 (MRQKSQEFRDTG) shows a compositional bias: basic and acidic residues.

Belongs to the ThiC family. In terms of assembly, homodimer. Requires [4Fe-4S] cluster as cofactor.

The enzyme catalyses 5-amino-1-(5-phospho-beta-D-ribosyl)imidazole + S-adenosyl-L-methionine = 4-amino-2-methyl-5-(phosphooxymethyl)pyrimidine + CO + 5'-deoxyadenosine + formate + L-methionine + 3 H(+). Its pathway is cofactor biosynthesis; thiamine diphosphate biosynthesis. Functionally, catalyzes the synthesis of the hydroxymethylpyrimidine phosphate (HMP-P) moiety of thiamine from aminoimidazole ribotide (AIR) in a radical S-adenosyl-L-methionine (SAM)-dependent reaction. The chain is Phosphomethylpyrimidine synthase from Vibrio atlanticus (strain LGP32) (Vibrio splendidus (strain Mel32)).